The sequence spans 290 residues: Light-independent protochlorophyllide reductase iron-sulfur ATP-binding protein (290 aa).

ATP-binding positions include 10–15 and K39; that span reads GIGKST. A Mg(2+)-binding site is contributed by S14. The [4Fe-4S] cluster site is built by C95 and C129. 180 to 181 serves as a coordination point for ATP; that stretch reads NR.

It belongs to the NifH/BchL/ChlL family. In terms of assembly, homodimer. Protochlorophyllide reductase is composed of three subunits; ChlL, ChlN and ChlB. [4Fe-4S] cluster is required as a cofactor.

The protein localises to the plastid. The protein resides in the chloroplast. It catalyses the reaction chlorophyllide a + oxidized 2[4Fe-4S]-[ferredoxin] + 2 ADP + 2 phosphate = protochlorophyllide a + reduced 2[4Fe-4S]-[ferredoxin] + 2 ATP + 2 H2O. It functions in the pathway porphyrin-containing compound metabolism; chlorophyll biosynthesis (light-independent). Component of the dark-operative protochlorophyllide reductase (DPOR) that uses Mg-ATP and reduced ferredoxin to reduce ring D of protochlorophyllide (Pchlide) to form chlorophyllide a (Chlide). This reaction is light-independent. The L component serves as a unique electron donor to the NB-component of the complex, and binds Mg-ATP. The polypeptide is Light-independent protochlorophyllide reductase iron-sulfur ATP-binding protein (Cycas taitungensis (Prince sago)).